We begin with the raw amino-acid sequence, 264 residues long: 3-methyl-2-oxobutanoate hydroxymethyltransferase (264 aa).

Residues Asp-45 and Asp-84 each coordinate Mg(2+). 3-methyl-2-oxobutanoate-binding positions include 45–46 (DS), Asp-84, and Lys-113. Residue Glu-115 coordinates Mg(2+). Catalysis depends on Glu-182, which acts as the Proton acceptor.

Belongs to the PanB family. In terms of assembly, homodecamer; pentamer of dimers. The cofactor is Mg(2+).

The protein resides in the cytoplasm. The enzyme catalyses 3-methyl-2-oxobutanoate + (6R)-5,10-methylene-5,6,7,8-tetrahydrofolate + H2O = 2-dehydropantoate + (6S)-5,6,7,8-tetrahydrofolate. It participates in cofactor biosynthesis; (R)-pantothenate biosynthesis; (R)-pantoate from 3-methyl-2-oxobutanoate: step 1/2. In terms of biological role, catalyzes the reversible reaction in which hydroxymethyl group from 5,10-methylenetetrahydrofolate is transferred onto alpha-ketoisovalerate to form ketopantoate. This chain is 3-methyl-2-oxobutanoate hydroxymethyltransferase, found in Nitrosococcus oceani (strain ATCC 19707 / BCRC 17464 / JCM 30415 / NCIMB 11848 / C-107).